We begin with the raw amino-acid sequence, 564 residues long: Urease subunit alpha (564 aa).

Positions 126–564 (GGIDTHIHFI…LPMAQRYFLF (439 aa)) constitute a Urease domain. His-131, His-133, and Lys-214 together coordinate Ni(2+). Position 214 is an N6-carboxylysine (Lys-214). A substrate-binding site is contributed by His-216. Ni(2+) contacts are provided by His-243 and His-269. His-317 acts as the Proton donor in catalysis. Asp-357 is a binding site for Ni(2+).

This sequence belongs to the metallo-dependent hydrolases superfamily. Urease alpha subunit family. In terms of assembly, heterotrimer of UreA (gamma), UreB (beta) and UreC (alpha) subunits. Three heterotrimers associate to form the active enzyme. The cofactor is Ni cation. Carboxylation allows a single lysine to coordinate two nickel ions.

The protein localises to the cytoplasm. The catalysed reaction is urea + 2 H2O + H(+) = hydrogencarbonate + 2 NH4(+). The protein operates within nitrogen metabolism; urea degradation; CO(2) and NH(3) from urea (urease route): step 1/1. This is Urease subunit alpha from Burkholderia thailandensis (strain ATCC 700388 / DSM 13276 / CCUG 48851 / CIP 106301 / E264).